The following is a 194-amino-acid chain: Sigma factor AlgU negative regulatory protein (194 aa).

A helical membrane pass occupies residues 89-105 (LAVAASVTLAVLAGVRL).

This sequence belongs to the RseA family.

The protein resides in the cell membrane. Functionally, negative regulator of the sigma factor AlgU. Plays a role in the differentiation of P.aeruginosa into the alginate-producing form. Inactivation of mucA causes a switch from the non-mucoid to mucoid state resulting in constitutive expression of alginate biosynthetic genes. The protein is Sigma factor AlgU negative regulatory protein (mucA) of Pseudomonas aeruginosa (strain ATCC 15692 / DSM 22644 / CIP 104116 / JCM 14847 / LMG 12228 / 1C / PRS 101 / PAO1).